The sequence spans 1083 residues: RecBCD enzyme subunit RecB (1083 aa).

One can recognise a UvrD-like helicase ATP-binding domain in the interval 1–323 (MKVFDLLGPL…QTLGTNWRSD (323 aa)). The tract at residues 1 to 704 (MKVFDLLGPL…RGRAPGEAIV (704 aa)) is DNA-binding and helicase activity, interacts with RecC. Residue 21–28 (ASAGTGKT) participates in ATP binding. One can recognise a UvrD-like helicase C-terminal domain in the interval 349–607 (VQARHQGHRL…QIMTVWVSKG (259 aa)). Residues 765–1083 (AWKRTSYSGL…LSKLLDAEAP (319 aa)) form a nuclease activity, interacts with RecD and RecA region. Mg(2+) contacts are provided by His830, Asp962, and Asp975. The active-site For nuclease activity is the Asp975.

It belongs to the helicase family. UvrD subfamily. As to quaternary structure, heterotrimer of RecB, RecC and RecD. All subunits contribute to DNA-binding. Interacts with RecA. Mg(2+) is required as a cofactor.

It catalyses the reaction Exonucleolytic cleavage (in the presence of ATP) in either 5'- to 3'- or 3'- to 5'-direction to yield 5'-phosphooligonucleotides.. The catalysed reaction is Couples ATP hydrolysis with the unwinding of duplex DNA by translocating in the 3'-5' direction.. The enzyme catalyses ATP + H2O = ADP + phosphate + H(+). Its function is as follows. A helicase/nuclease that prepares dsDNA breaks (DSB) for recombinational DNA repair. Binds to DSBs and unwinds DNA via a highly rapid and processive ATP-dependent bidirectional helicase activity. Holoenzyme degrades any linearized DNA that is unable to undergo homologous recombination. In the holoenzyme this subunit contributes DNA-dependent ATPase activity, exonuclease activity and 3'-5' helicase activity. Unlike the case in E.coli, suppresses RecA-dependent homologous recombination, is instead required for single-strand annealing pathway repair of DSB. The sequence is that of RecBCD enzyme subunit RecB from Mycolicibacterium smegmatis (strain ATCC 700084 / mc(2)155) (Mycobacterium smegmatis).